The following is a 676-amino-acid chain: ATP-dependent zinc metalloprotease FTSH 2, chloroplastic (676 aa).

The N-terminal 32 residues, 1-32 (MAPTSMSLAAKTPLPFSTLPSSGVAQRPVSVT), are a transit peptide targeting the chloroplast. Residues 155-175 (LLFNLIGNLAFPLILIGGLFL) traverse the membrane as a helical segment. 254-261 (GPPGTGKT) serves as a coordination point for ATP. His475 contributes to the Zn(2+) binding site. The active site involves Glu476. His479 and Asp553 together coordinate Zn(2+).

In the N-terminal section; belongs to the AAA ATPase family. It in the C-terminal section; belongs to the peptidase M41 family. It depends on Zn(2+) as a cofactor.

It localises to the plastid. The protein resides in the chloroplast thylakoid membrane. In terms of biological role, probable ATP-dependent zinc metallopeptidase. This chain is ATP-dependent zinc metalloprotease FTSH 2, chloroplastic (FTSH2), found in Oryza sativa subsp. japonica (Rice).